The sequence spans 1008 residues: MEDLQPINPNTDSPTETGATTIEARFSDFCKGRLTMDDNALEEAMKLFNQSKHLFMTNASALGSGTPEEAEHYWFAFILFSMKRLSKKNDGEDAAKSSENSFKLYQILRVAKLNFVDFFKELPQFIVKTGPILSNLYGSDWETRLQAKELQANFVHLSLLSKFYKRAFKTLFKATHENVEGQSAVANSADYISNCHRFGWMLFLALRVHAFSRFKDLVTCTNGLVSILAILIIHIPARFRNFSMSDSSRFVKKDDKVVDLLASLCNMYETSEDELRKTVVRTNIVVEEILKKDPSMASECTNGNLDNIDTDDLTYFQDLLEEQSLSSDLDVLEKDYDDAMLLEGELDERLFINDEESLLGSSSLSGGAINMTGTKRKVDSMTSPTKTITSPLSPYKSPSKMISTPVSTAMTTAKWLRTVVSPLSSFPSVDLTRFLQSCDKDVTSDVIKRARIILEAIFPSSGIPDRTIISNTQTTNLMDNIWAEQRRLEALKLYYRVLHAMCKAESQILHGNNLTSLLTNERFHRCMLACSAELVLATHKTVTMLFPAVLERTGITAFDLSKVIESFIRHEEPLPRELRRHLNSLEERLLESMVWEKGSSMYNSLTIARPNLSNEINRLGLLADPMPSLDAIALQCNMSCGGLPPVPKRDTSPGKSGEIRSPKRVCNEYRSVLVERNSFTSPVKDRLLGINNLKSKILSPALQSAFASPTRPHPTRGETCGETAVNLFFSKIVKLAAVRINGMVERMQLTQQIRERVYCLFQQILGQRTSLFFNRHIDQIILCCFYGVAKISQLSLTFKEIIFNYRKQPHCKPQVFRAVFVDDRSSSRRSKTGQDHVDIIMFYNEVFIPSVKPLLVELAPSNVPKNPNNQVSDSNKKDESGPCPCPGSPKVSSFPSLPDMSPKKVSAVHNVYVSPLRSTKMDALISHGSKSYYACVGESTHAYQSPSKDLTAINNRLNGTRKVRGSLNFDEVDVGLVSDSLVTQSLYLQNGQNGKGPSSSSGQELKTE.

A disordered region spans residues 375–394; the sequence is KRKVDSMTSPTKTITSPLSP. Residues 380–392 are compositionally biased toward polar residues; it reads SMTSPTKTITSPL. The segment at 404-605 is domain A; the sequence is TPVSTAMTTA…EKGSSMYNSL (202 aa). The pocket stretch occupies residues 404–853; it reads TPVSTAMTTA…NEVFIPSVKP (450 aa). Positions 606–722 are spacer; it reads TIARPNLSNE…HPTRGETCGE (117 aa). Residues 723 to 853 form a domain B region; sequence TAVNLFFSKI…NEVFIPSVKP (131 aa). Disordered stretches follow at residues 865-899 and 988-1008; these read KNPN…SLPD and LQNG…LKTE.

The protein belongs to the retinoblastoma protein (RB) family.

The protein resides in the nucleus. Functionally, regulator of biological processes that recruits a histone deacetylase to control gene transcription. May play a role in the entry into mitosis, negatively regulating the cell proliferation. Formation of stable complexes with geminiviridae replication-associated proteins may create a cellular environment which favors viral DNA replication. The polypeptide is Retinoblastoma-related protein (RBR) (Pilosella officinarum (Mouse-ear hawkweed)).